The chain runs to 89 residues: Elongation factor 1-beta (89 aa).

This sequence belongs to the EF-1-beta/EF-1-delta family.

Functionally, promotes the exchange of GDP for GTP in EF-1-alpha/GDP, thus allowing the regeneration of EF-1-alpha/GTP that could then be used to form the ternary complex EF-1-alpha/GTP/AAtRNA. The chain is Elongation factor 1-beta from Methanococcoides burtonii (strain DSM 6242 / NBRC 107633 / OCM 468 / ACE-M).